Here is a 485-residue protein sequence, read N- to C-terminus: Glutamate--tRNA ligase (485 aa).

The short motif at 11–21 (PSPTGHLHIGN) is the 'HIGH' region element. Positions 252–256 (KLSKR) match the 'KMSKS' region motif. ATP is bound at residue Lys-255.

Belongs to the class-I aminoacyl-tRNA synthetase family. Glutamate--tRNA ligase type 1 subfamily. Monomer.

Its subcellular location is the cytoplasm. The enzyme catalyses tRNA(Glu) + L-glutamate + ATP = L-glutamyl-tRNA(Glu) + AMP + diphosphate. Functionally, catalyzes the attachment of glutamate to tRNA(Glu) in a two-step reaction: glutamate is first activated by ATP to form Glu-AMP and then transferred to the acceptor end of tRNA(Glu). The polypeptide is Glutamate--tRNA ligase (Bacillus licheniformis (strain ATCC 14580 / DSM 13 / JCM 2505 / CCUG 7422 / NBRC 12200 / NCIMB 9375 / NCTC 10341 / NRRL NRS-1264 / Gibson 46)).